A 557-amino-acid chain; its full sequence is Neurofilament light polypeptide (557 aa).

N-acetylserine is present on Ser-2. The segment at 2 to 89 (SSYSYDPYYT…KIVRTQEKAQ (88 aa)) is head. One can recognise an IF rod domain in the interval 86–396 (EKAQLQDLND…KLLEGEETRL (311 aa)). The segment at 90-121 (LQDLNDRFANFIERVHELEQRNKVLEAELLLL) is coil 1A. Positions 122–134 (RQKHNEPSRLRDL) are linker 1. Residues 135-230 (YEQEVRELRL…KVHEEELAQL (96 aa)) form a coil 1B region. The tract at residues 231–248 (QSQVQYAQISLEVEVAKP) is linker 12. The coil 2A stretch occupies residues 249–267 (DLSSALRDIRAQYEKLAAK). A linker 2 region spans residues 268 to 276 (NMQSAEDWF). A coil 2B region spans residues 277-392 (KSRFTVLTQS…AAYRKLLEGE (116 aa)). Positions 393-437 (ETRLSFSGVGAITSGYTQSAPVFGRSAYSLQSSSYMTSRAFPTYY) are tail, subdomain A. The tract at residues 393-557 (ETRLSFSGVG…KKKKKKKKKK (165 aa)) is tail. A tail, subdomain B (acidic) region spans residues 438-557 (SSHVQEEQLD…KKKKKKKKKK (120 aa)). Residues 452 to 557 (IESSRAEEAK…KKKKKKKKKK (106 aa)) are disordered. The segment covering 453-464 (ESSRAEEAKAEA) has biased composition (basic and acidic residues). Over residues 465 to 538 (PEEEEEEAGE…GEGEEEEEGK (74 aa)) the composition is skewed to acidic residues. Over residues 539 to 548 (GEEPAEEESK) the composition is skewed to basic and acidic residues.

It belongs to the intermediate filament family. In terms of assembly, forms homodimers (in vitro).

The protein localises to the cell projection. It localises to the axon. The protein resides in the cytoplasm. It is found in the cytoskeleton. In terms of biological role, neurofilaments usually contain three intermediate filament proteins: NEFL, NEFM, and NEFH which are involved in the maintenance of neuronal caliber. May additionally cooperate with other neuronal intermediate filament proteins to form neuronal filamentous networks. This chain is Neurofilament light polypeptide (nefl), found in Xenopus tropicalis (Western clawed frog).